The chain runs to 205 residues: Guanylate kinase (205 aa).

The region spanning 19 to 197 (PKLFTISAPA…AYRVLKSIFI (179 aa)) is the Guanylate kinase-like domain. 26–33 (APAGVGKT) is a binding site for ATP.

Belongs to the guanylate kinase family.

It is found in the cytoplasm. The enzyme catalyses GMP + ATP = GDP + ADP. Essential for recycling GMP and indirectly, cGMP. The chain is Guanylate kinase (gmk) from Chlamydia pneumoniae (Chlamydophila pneumoniae).